The primary structure comprises 147 residues: MAKPIIDDELWTLIEPLLPPPKPRREKNPGRLPVSNRAALTGILFVLKTGLRWRDLPAEMGCGSGVTCWRRLRDWQAAGVWDRLHELLLAKLRAADQIDFSRAAVDSSSIRAVGAGQKLGQTPPIARDPVPSTTSSPTPTVRRSPRS.

Residues 106–147 (DSSSIRAVGAGQKLGQTPPIARDPVPSTTSSPTPTVRRSPRS) are disordered. Residues 129–147 (PVPSTTSSPTPTVRRSPRS) are compositionally biased toward low complexity.

The protein belongs to the transposase 6 family.

The polypeptide is Insertion element IS402 uncharacterized 16.2 kDa protein (Burkholderia cepacia (Pseudomonas cepacia)).